Here is a 61-residue protein sequence, read N- to C-terminus: Photosystem II reaction center protein Z (61 aa).

2 helical membrane passes run 5-25 (LTAL…VALA) and 38-58 (NKAF…DGIS).

The protein belongs to the PsbZ family. As to quaternary structure, PSII is composed of 1 copy each of membrane proteins PsbA, PsbB, PsbC, PsbD, PsbE, PsbF, PsbH, PsbI, PsbJ, PsbK, PsbL, PsbM, PsbT, PsbX, PsbY, PsbZ, Psb30/Ycf12, at least 3 peripheral proteins of the oxygen-evolving complex and a large number of cofactors. It forms dimeric complexes.

The protein localises to the plastid. The protein resides in the chloroplast thylakoid membrane. May control the interaction of photosystem II (PSII) cores with the light-harvesting antenna, regulates electron flow through the 2 photosystem reaction centers. PSII is a light-driven water plastoquinone oxidoreductase, using light energy to abstract electrons from H(2)O, generating a proton gradient subsequently used for ATP formation. This chain is Photosystem II reaction center protein Z, found in Skeletonema costatum (Marine centric diatom).